Here is a 105-residue protein sequence, read N- to C-terminus: Thiosulfate sulfurtransferase GlpE (105 aa).

One can recognise a Rhodanese domain in the interval Met-15–Thr-103. Cys-63 (cysteine persulfide intermediate) is an active-site residue.

The protein belongs to the GlpE family.

Its subcellular location is the cytoplasm. The catalysed reaction is thiosulfate + hydrogen cyanide = thiocyanate + sulfite + 2 H(+). It carries out the reaction thiosulfate + [thioredoxin]-dithiol = [thioredoxin]-disulfide + hydrogen sulfide + sulfite + 2 H(+). Functionally, transferase that catalyzes the transfer of sulfur from thiosulfate to thiophilic acceptors such as cyanide or dithiols. May function in a CysM-independent thiosulfate assimilation pathway by catalyzing the conversion of thiosulfate to sulfite, which can then be used for L-cysteine biosynthesis. This chain is Thiosulfate sulfurtransferase GlpE, found in Haemophilus influenzae (strain ATCC 51907 / DSM 11121 / KW20 / Rd).